Reading from the N-terminus, the 387-residue chain is Alkanesulfonate monooxygenase (387 aa).

Belongs to the SsuD family.

It carries out the reaction an alkanesulfonate + FMNH2 + O2 = an aldehyde + FMN + sulfite + H2O + 2 H(+). Catalyzes the desulfonation of aliphatic sulfonates. The protein is Alkanesulfonate monooxygenase of Ralstonia nicotianae (strain ATCC BAA-1114 / GMI1000) (Ralstonia solanacearum).